Here is a 58-residue protein sequence, read N- to C-terminus: Large ribosomal subunit protein uL30 (58 aa).

This sequence belongs to the universal ribosomal protein uL30 family. In terms of assembly, part of the 50S ribosomal subunit.

The sequence is that of Large ribosomal subunit protein uL30 from Pseudomonas putida (strain ATCC 700007 / DSM 6899 / JCM 31910 / BCRC 17059 / LMG 24140 / F1).